We begin with the raw amino-acid sequence, 452 residues long: Probable ECA polymerase (452 aa).

The next 11 helical transmembrane spans lie at 6–26 (FSGL…LTWF), 37–57 (VFFS…TSVL), 63–83 (VGVA…CFYG), 118–138 (VILM…NGFL), 155–175 (GVAL…VYFL), 181–201 (AWLF…MIVG), 207–227 (IIIA…ISLW), 228–248 (MLVA…LKRY), 341–361 (LVVM…GLII), 378–398 (YKAA…IVLA), and 410–430 (VFFL…FWLF).

It belongs to the WzyE family. As to quaternary structure, probably part of a complex composed of WzxE, WzyE and WzzE.

The protein resides in the cell inner membrane. The protein operates within bacterial outer membrane biogenesis; enterobacterial common antigen biosynthesis. Probably involved in the polymerization of enterobacterial common antigen (ECA) trisaccharide repeat units. The polypeptide is Probable ECA polymerase (Salmonella agona (strain SL483)).